A 114-amino-acid chain; its full sequence is Cytochrome c oxidase subunit 4B (114 aa).

3 consecutive transmembrane segments (helical) span residues Q29–T49, F56–F76, and A89–L109.

Belongs to the cytochrome c oxidase bacterial subunit 4 family.

The protein resides in the cell membrane. It catalyses the reaction 4 Fe(II)-[cytochrome c] + O2 + 8 H(+)(in) = 4 Fe(III)-[cytochrome c] + 2 H2O + 4 H(+)(out). This Alkalihalophilus pseudofirmus (strain ATCC BAA-2126 / JCM 17055 / OF4) (Bacillus pseudofirmus) protein is Cytochrome c oxidase subunit 4B (ctaF).